Reading from the N-terminus, the 480-residue chain is tRNA-2-methylthio-N(6)-dimethylallyladenosine synthase (480 aa).

One can recognise an MTTase N-terminal domain in the interval 2-118; that stretch reads NRVHIKTYGC…VPGYLDNLRA (117 aa). [4Fe-4S] cluster-binding residues include Cys11, Cys47, and Cys81. Positions 145–169 are disordered; that stretch reads DHLLPQDSDSDSQPSTLNSQLRGAA. The span at 149-159 shows a compositional bias: low complexity; sequence PQDSDSDSQPS. Residues 171-405 form the Radical SAM core domain; it reads PPPQITAFVS…LELLRQNSER (235 aa). Residues Cys185, Cys189, and Cys192 each contribute to the [4Fe-4S] cluster site. Residues 408 to 470 enclose the TRAM domain; sequence ALLLDTVEEV…VSTLYGELML (63 aa).

The protein belongs to the methylthiotransferase family. MiaB subfamily. In terms of assembly, monomer. The cofactor is [4Fe-4S] cluster.

Its subcellular location is the cytoplasm. The catalysed reaction is N(6)-dimethylallyladenosine(37) in tRNA + (sulfur carrier)-SH + AH2 + 2 S-adenosyl-L-methionine = 2-methylsulfanyl-N(6)-dimethylallyladenosine(37) in tRNA + (sulfur carrier)-H + 5'-deoxyadenosine + L-methionine + A + S-adenosyl-L-homocysteine + 2 H(+). Functionally, catalyzes the methylthiolation of N6-(dimethylallyl)adenosine (i(6)A), leading to the formation of 2-methylthio-N6-(dimethylallyl)adenosine (ms(2)i(6)A) at position 37 in tRNAs that read codons beginning with uridine. This is tRNA-2-methylthio-N(6)-dimethylallyladenosine synthase from Opitutus terrae (strain DSM 11246 / JCM 15787 / PB90-1).